Consider the following 488-residue polypeptide: Solute carrier family 41 member 3 (488 aa).

Composition is skewed to basic and acidic residues over residues 1-19 and 27-36; these read MEGT…RLKE and DAGRLPKASE. The disordered stretch occupies residues 1 to 36; the sequence is MEGTEARQRRLEGCGRLKELGPLPSHDAGRLPKASE. A run of 9 helical transmembrane segments spans residues 63–83, 147–167, 189–209, 220–240, 251–271, 284–304, 377–397, 406–426, and 450–470; these read LIIG…LSWA, LAVV…ASLM, VITA…IVIG, IATP…LALM, WYLT…WLFI, YGWF…LILS, VLLF…CLVE, IFIL…LYLA, and GLGD…DWLL.

The protein belongs to the SLC41A transporter family.

It is found in the mitochondrion inner membrane. It catalyses the reaction Mg(2+)(in) + 2 Na(+)(out) = Mg(2+)(out) + 2 Na(+)(in). Its function is as follows. Na(+)/Mg(2+) ion exchanger that acts as a predominant Mg(2+) efflux system at the mitochondrial inner membrane. In Mus musculus (Mouse), this protein is Solute carrier family 41 member 3 (Slc41a3).